A 156-amino-acid chain; its full sequence is Large ribosomal subunit protein uL22 (156 aa).

This sequence belongs to the universal ribosomal protein uL22 family. In terms of assembly, part of the 50S ribosomal subunit.

In terms of biological role, this protein binds specifically to 23S rRNA. It makes multiple contacts with different domains of the 23S rRNA in the assembled 50S subunit and ribosome. Its function is as follows. The globular domain of the protein is located near the polypeptide exit tunnel on the outside of the subunit, while an extended beta-hairpin is found that lines the wall of the exit tunnel in the center of the 70S ribosome. The chain is Large ribosomal subunit protein uL22 from Sulfolobus acidocaldarius (strain ATCC 33909 / DSM 639 / JCM 8929 / NBRC 15157 / NCIMB 11770).